A 663-amino-acid chain; its full sequence is UvrABC system protein B (663 aa).

The segment covering Met-1–Phe-10 has biased composition (basic and acidic residues). Positions Met-1–Pro-23 are disordered. Positions Asp-31–Arg-418 constitute a Helicase ATP-binding domain. Gly-44–Thr-51 serves as a coordination point for ATP. A Beta-hairpin motif is present at residues Tyr-97–Val-120. Residues Gln-435–Ile-597 enclose the Helicase C-terminal domain. Residues Lys-627–Met-662 enclose the UVR domain.

This sequence belongs to the UvrB family. Forms a heterotetramer with UvrA during the search for lesions. Interacts with UvrC in an incision complex.

It localises to the cytoplasm. Its function is as follows. The UvrABC repair system catalyzes the recognition and processing of DNA lesions. A damage recognition complex composed of 2 UvrA and 2 UvrB subunits scans DNA for abnormalities. Upon binding of the UvrA(2)B(2) complex to a putative damaged site, the DNA wraps around one UvrB monomer. DNA wrap is dependent on ATP binding by UvrB and probably causes local melting of the DNA helix, facilitating insertion of UvrB beta-hairpin between the DNA strands. Then UvrB probes one DNA strand for the presence of a lesion. If a lesion is found the UvrA subunits dissociate and the UvrB-DNA preincision complex is formed. This complex is subsequently bound by UvrC and the second UvrB is released. If no lesion is found, the DNA wraps around the other UvrB subunit that will check the other stand for damage. This is UvrABC system protein B from Streptococcus pyogenes serotype M18 (strain MGAS8232).